Reading from the N-terminus, the 347-residue chain is Dihydroorotase (347 aa).

Residues His14 and His16 each coordinate Zn(2+). Substrate contacts are provided by residues 16–18 and Asn42; that span reads HLR. Zn(2+) is bound by residues Lys100, His137, and His175. Position 100 is an N6-carboxylysine (Lys100). His137 serves as a coordination point for substrate. A substrate-binding site is contributed by Leu220. Asp248 provides a ligand contact to Zn(2+). Asp248 is a catalytic residue. Residues His252 and Ala264 each coordinate substrate.

It belongs to the metallo-dependent hydrolases superfamily. DHOase family. Class II DHOase subfamily. In terms of assembly, homodimer. Zn(2+) is required as a cofactor.

It catalyses the reaction (S)-dihydroorotate + H2O = N-carbamoyl-L-aspartate + H(+). It functions in the pathway pyrimidine metabolism; UMP biosynthesis via de novo pathway; (S)-dihydroorotate from bicarbonate: step 3/3. In terms of biological role, catalyzes the reversible cyclization of carbamoyl aspartate to dihydroorotate. The polypeptide is Dihydroorotase (Pseudomonas savastanoi pv. phaseolicola (strain 1448A / Race 6) (Pseudomonas syringae pv. phaseolicola (strain 1448A / Race 6))).